We begin with the raw amino-acid sequence, 149 residues long: Chromophore lyase CpcS/CpeS homolog (149 aa).

This sequence belongs to the CpcS/CpeS biliprotein lyase family.

It is found in the plastid. It localises to the chloroplast. Functionally, might function to covalently attach a chromophore to Cys residue(s) of phycobiliproteins. The polypeptide is Chromophore lyase CpcS/CpeS homolog (Pyropia yezoensis (Susabi-nori)).